The sequence spans 294 residues: Metallophosphoesterase MPPED2 (294 aa).

Mn(2+) contacts are provided by aspartate 65, histidine 67, aspartate 86, asparagine 117, and histidine 213. Residue 117 to 118 (NH) participates in GMP binding. Residues 225 to 226 (KE) and 254 to 255 (HE) each bind GMP. Histidine 254 contacts Mn(2+).

This sequence belongs to the UPF0046 family. In terms of assembly, homodimer. It depends on Mn(2+) as a cofactor. Co(2+) is required as a cofactor. In terms of tissue distribution, expressed in fetal brain (at protein level). detected in fetal and adult brain.

With respect to regulation, inhibited by nmolar levels of AMP and GMP. Displays low metallophosphoesterase activity (in vitro). May play a role in the development of the nervous system. In Rattus norvegicus (Rat), this protein is Metallophosphoesterase MPPED2 (Mpped2).